A 316-amino-acid polypeptide reads, in one-letter code: Transaldolase (316 aa).

The Schiff-base intermediate with substrate role is filled by K132.

It belongs to the transaldolase family. Type 1 subfamily. As to quaternary structure, homodimer.

Its subcellular location is the cytoplasm. It carries out the reaction D-sedoheptulose 7-phosphate + D-glyceraldehyde 3-phosphate = D-erythrose 4-phosphate + beta-D-fructose 6-phosphate. The protein operates within carbohydrate degradation; pentose phosphate pathway; D-glyceraldehyde 3-phosphate and beta-D-fructose 6-phosphate from D-ribose 5-phosphate and D-xylulose 5-phosphate (non-oxidative stage): step 2/3. Its function is as follows. Transaldolase is important for the balance of metabolites in the pentose-phosphate pathway. The chain is Transaldolase from Aliivibrio salmonicida (strain LFI1238) (Vibrio salmonicida (strain LFI1238)).